We begin with the raw amino-acid sequence, 406 residues long: Bifunctional enzyme IspD/IspF (406 aa).

The tract at residues 1–246 (MLQMPSKQPI…KLSASLLPDV (246 aa)) is 2-C-methyl-D-erythritol 4-phosphate cytidylyltransferase. The tract at residues 247-406 (RTGNGYDVHQ…ATVVYRGVKR (160 aa)) is 2-C-methyl-D-erythritol 2,4-cyclodiphosphate synthase. D253 and H255 together coordinate a divalent metal cation. 4-CDP-2-C-methyl-D-erythritol 2-phosphate-binding positions include 253-255 (DVH) and 279-280 (HS). Residue H287 participates in a divalent metal cation binding. Residues 301-303 (DIG), 377-380 (TTNE), F384, and R387 each bind 4-CDP-2-C-methyl-D-erythritol 2-phosphate.

In the N-terminal section; belongs to the IspD/TarI cytidylyltransferase family. IspD subfamily. It in the C-terminal section; belongs to the IspF family. The cofactor is a divalent metal cation.

It carries out the reaction 2-C-methyl-D-erythritol 4-phosphate + CTP + H(+) = 4-CDP-2-C-methyl-D-erythritol + diphosphate. The catalysed reaction is 4-CDP-2-C-methyl-D-erythritol 2-phosphate = 2-C-methyl-D-erythritol 2,4-cyclic diphosphate + CMP. It participates in isoprenoid biosynthesis; isopentenyl diphosphate biosynthesis via DXP pathway; isopentenyl diphosphate from 1-deoxy-D-xylulose 5-phosphate: step 2/6. It functions in the pathway isoprenoid biosynthesis; isopentenyl diphosphate biosynthesis via DXP pathway; isopentenyl diphosphate from 1-deoxy-D-xylulose 5-phosphate: step 4/6. In terms of biological role, bifunctional enzyme that catalyzes the formation of 4-diphosphocytidyl-2-C-methyl-D-erythritol from CTP and 2-C-methyl-D-erythritol 4-phosphate (MEP) (IspD), and catalyzes the conversion of 4-diphosphocytidyl-2-C-methyl-D-erythritol 2-phosphate (CDP-ME2P) to 2-C-methyl-D-erythritol 2,4-cyclodiphosphate (ME-CPP) with a corresponding release of cytidine 5-monophosphate (CMP) (IspF). The protein is Bifunctional enzyme IspD/IspF of Rhizobium leguminosarum bv. trifolii (strain WSM2304).